The sequence spans 368 residues: MPKPGELTFVAPRGVKKPPRHLADLTPAERKEAVAAIGEKPFRAKQLSQHYFARYAHAPEQWTDIPAGSREGLREALLPELMTVVRHLSTDQGTTRKTLWKLFDGTLVESVLMRYPDRVTMCISSQAGCGMNCPFCATGQAGLDRNLSTAEIVHQIVDGMRALRDGEVPGGPARLSNIVFMGMGEPLANYNRVVGAIRRLTDPEPDGLGLSQRGITVSTVGLVPAIHRFTGEGFKCRLAISLHAPDDELRDTLVPVNTRWKVREVLDAGFEYAAKSGRRLSIEYALIRDINDQAWRGDRLGRLLRGRPVHVNLIPLNPTPGSKWTASRPEDEKAFVEAIAAHGVPVTIRDTRGQEIDGACGQLAASER.

Glu109 functions as the Proton acceptor in the catalytic mechanism. Residues 115–355 (YPDRVTMCIS…VTIRDTRGQE (241 aa)) form the Radical SAM core domain. A disulfide bridge links Cys122 with Cys360. [4Fe-4S] cluster contacts are provided by Cys129, Cys133, and Cys136. Residues 184–185 (GE), Ser218, 241–243 (SLH), and Asn317 contribute to the S-adenosyl-L-methionine site. The active-site S-methylcysteine intermediate is Cys360.

It belongs to the radical SAM superfamily. RlmN family. It depends on [4Fe-4S] cluster as a cofactor.

It is found in the cytoplasm. The catalysed reaction is adenosine(2503) in 23S rRNA + 2 reduced [2Fe-2S]-[ferredoxin] + 2 S-adenosyl-L-methionine = 2-methyladenosine(2503) in 23S rRNA + 5'-deoxyadenosine + L-methionine + 2 oxidized [2Fe-2S]-[ferredoxin] + S-adenosyl-L-homocysteine. It carries out the reaction adenosine(37) in tRNA + 2 reduced [2Fe-2S]-[ferredoxin] + 2 S-adenosyl-L-methionine = 2-methyladenosine(37) in tRNA + 5'-deoxyadenosine + L-methionine + 2 oxidized [2Fe-2S]-[ferredoxin] + S-adenosyl-L-homocysteine. In terms of biological role, specifically methylates position 2 of adenine 2503 in 23S rRNA and position 2 of adenine 37 in tRNAs. In Streptomyces coelicolor (strain ATCC BAA-471 / A3(2) / M145), this protein is Probable dual-specificity RNA methyltransferase RlmN.